Consider the following 518-residue polypeptide: 2-isopropylmalate synthase (518 aa).

The region spanning 4–266 is the Pyruvate carboxyltransferase domain; the sequence is INFFDTTLRD…ESTIQLNEIK (263 aa). Mn(2+) contacts are provided by D13, H201, H203, and N237. The tract at residues 391 to 518 is regulatory domain; the sequence is DFISLQVHYG…GLSKQAAVGS (128 aa).

This sequence belongs to the alpha-IPM synthase/homocitrate synthase family. LeuA type 1 subfamily. In terms of assembly, homodimer. Mn(2+) is required as a cofactor.

Its subcellular location is the cytoplasm. It catalyses the reaction 3-methyl-2-oxobutanoate + acetyl-CoA + H2O = (2S)-2-isopropylmalate + CoA + H(+). It participates in amino-acid biosynthesis; L-leucine biosynthesis; L-leucine from 3-methyl-2-oxobutanoate: step 1/4. Functionally, catalyzes the condensation of the acetyl group of acetyl-CoA with 3-methyl-2-oxobutanoate (2-ketoisovalerate) to form 3-carboxy-3-hydroxy-4-methylpentanoate (2-isopropylmalate). The chain is 2-isopropylmalate synthase from Bacillus licheniformis (strain ATCC 14580 / DSM 13 / JCM 2505 / CCUG 7422 / NBRC 12200 / NCIMB 9375 / NCTC 10341 / NRRL NRS-1264 / Gibson 46).